A 581-amino-acid polypeptide reads, in one-letter code: Tricyclene synthase Oc15, chloroplastic (581 aa).

A chloroplast-targeting transit peptide spans 1 to 68 (MAFCISYVGA…ALCLNEHSLS (68 aa)). Residues asparagine 27, asparagine 206, and asparagine 319 are each glycosylated (N-linked (GlcNAc...) asparagine). Mg(2+) contacts are provided by aspartate 338 and aspartate 342. The short motif at 338–342 (DDIFD) is the DDXXD motif element. 2 N-linked (GlcNAc...) asparagine glycosylation sites follow: asparagine 384 and asparagine 465. Asparagine 482, serine 486, and glutamate 490 together coordinate Mg(2+). Asparagine 509 carries N-linked (GlcNAc...) asparagine glycosylation.

It belongs to the terpene synthase family. Tpsg subfamily. The cofactor is Mg(2+). It depends on Mn(2+) as a cofactor. As to expression, accumulates in flowers; mostly expressed in both upper and lower petal lobes, and, to a lower extent, in tube and stamens.

It is found in the plastid. Its subcellular location is the chloroplast stroma. The catalysed reaction is (2E)-geranyl diphosphate = tricyclene + diphosphate. It catalyses the reaction (2E)-geranyl diphosphate = beta-myrcene + diphosphate. The protein operates within secondary metabolite biosynthesis; terpenoid biosynthesis. Contributes to floral scent emission. This chain is Tricyclene synthase Oc15, chloroplastic (Oc15), found in Antirrhinum majus (Garden snapdragon).